Here is a 99-residue protein sequence, read N- to C-terminus: Large ribosomal subunit protein bL21 (99 aa).

Belongs to the bacterial ribosomal protein bL21 family. As to quaternary structure, part of the 50S ribosomal subunit. Contacts protein L20.

Its function is as follows. This protein binds to 23S rRNA in the presence of protein L20. This chain is Large ribosomal subunit protein bL21, found in Mycoplasmopsis agalactiae (strain NCTC 10123 / CIP 59.7 / PG2) (Mycoplasma agalactiae).